The sequence spans 481 residues: 6-phosphogluconate dehydrogenase, decarboxylating (481 aa).

NADP(+)-binding positions include 11-16 (GLAVMG), 34-36 (NRT), 76-78 (VKG), and N104. Substrate-binding positions include N104 and 130 to 132 (SGG). Residue K184 is the Proton acceptor of the active site. 187 to 188 (HN) contributes to the substrate binding site. The Proton donor role is filled by E191. Residues Y192, K259, R286, R445, and H451 each coordinate substrate.

This sequence belongs to the 6-phosphogluconate dehydrogenase family. In terms of assembly, homodimer.

The catalysed reaction is 6-phospho-D-gluconate + NADP(+) = D-ribulose 5-phosphate + CO2 + NADPH. It participates in carbohydrate degradation; pentose phosphate pathway; D-ribulose 5-phosphate from D-glucose 6-phosphate (oxidative stage): step 3/3. Catalyzes the oxidative decarboxylation of 6-phosphogluconate to ribulose 5-phosphate and CO(2), with concomitant reduction of NADP to NADPH. This is 6-phosphogluconate dehydrogenase, decarboxylating (Pgd) from Drosophila simulans (Fruit fly).